The primary structure comprises 156 residues: Cellulose synthase operon protein D (156 aa).

It functions in the pathway glycan metabolism; bacterial cellulose biosynthesis. May have a major role in the perfection of crystallization, involved either in the pore structure itself or in the organization of the pores within the linear array of terminal synthesizing complexes (TCs). The protein is Cellulose synthase operon protein D (bcsDI) of Komagataeibacter xylinus (Gluconacetobacter xylinus).